We begin with the raw amino-acid sequence, 481 residues long: UDP-glycosyltransferase 85C2 (481 aa).

His23 serves as the catalytic Proton acceptor. His23 lines the an anthocyanidin pocket. Residue Asp120 is the Charge relay of the active site. 8 residues coordinate UDP-alpha-D-glucose: Thr143, Gln362, His377, Trp380, Ser382, Glu385, Asp401, and Gln402.

The protein belongs to the UDP-glycosyltransferase family.

It carries out the reaction steviol + UDP-alpha-D-glucose = steviolmonoside + UDP + H(+). The enzyme catalyses steviolmonoside + UDP-alpha-D-glucose = rubusoside + UDP. Its function is as follows. Involved in the biosynthesis of steviol glycosides in leaves. Converts steviol to the mono-glycoside steviolmonoside. Converts the mono-glycoside steviolmonoside to the bi-glycoside rubusoside. This chain is UDP-glycosyltransferase 85C2, found in Stevia rebaudiana (Stevia).